A 1056-amino-acid chain; its full sequence is Isoleucine--tRNA ligase (1056 aa).

A compositionally biased stretch (polar residues) spans Met-1–Ser-13. Residues Met-1–Leu-26 form a disordered region. Positions Pro-63–His-73 match the 'HIGH' region motif. The short motif at Lys-632–Ser-636 is the 'KMSKS' region element. An ATP-binding site is contributed by Lys-635.

It belongs to the class-I aminoacyl-tRNA synthetase family. IleS type 2 subfamily. As to quaternary structure, monomer. It depends on Zn(2+) as a cofactor.

Its subcellular location is the cytoplasm. The catalysed reaction is tRNA(Ile) + L-isoleucine + ATP = L-isoleucyl-tRNA(Ile) + AMP + diphosphate. In terms of biological role, catalyzes the attachment of isoleucine to tRNA(Ile). As IleRS can inadvertently accommodate and process structurally similar amino acids such as valine, to avoid such errors it has two additional distinct tRNA(Ile)-dependent editing activities. One activity is designated as 'pretransfer' editing and involves the hydrolysis of activated Val-AMP. The other activity is designated 'posttransfer' editing and involves deacylation of mischarged Val-tRNA(Ile). This is Isoleucine--tRNA ligase from Tropheryma whipplei (strain TW08/27) (Whipple's bacillus).